The chain runs to 364 residues: Endoglucanase A (364 aa).

E169 functions as the Proton donor in the catalytic mechanism. Catalysis depends on E293, which acts as the Nucleophile.

It belongs to the glycosyl hydrolase 5 (cellulase A) family.

It is found in the cytoplasm. The enzyme catalyses Endohydrolysis of (1-&gt;4)-beta-D-glucosidic linkages in cellulose, lichenin and cereal beta-D-glucans.. The catalysed reaction is Endohydrolysis of (1-&gt;4)-beta-D-xylosidic linkages in xylans.. Hydrolyzes both carboxymethylcellulose and xylan. Probably has a role in hydrolyzing oligosaccharides derived from cellulose, which are transported across the cell wall. The chain is Endoglucanase A (celA) from Ruminococcus albus.